A 211-amino-acid chain; its full sequence is ATP-dependent dethiobiotin synthetase BioD (211 aa).

10–15 (GIGKTY) lines the ATP pocket. Thr-14 provides a ligand contact to Mg(2+). The active site involves Lys-35. Residue Ser-39 participates in substrate binding. ATP contacts are provided by residues Asp-44, 105–108 (EGAG), and 165–166 (NC). Mg(2+) contacts are provided by Asp-44 and Glu-105.

Belongs to the dethiobiotin synthetase family. In terms of assembly, homodimer. It depends on Mg(2+) as a cofactor.

It is found in the cytoplasm. The enzyme catalyses (7R,8S)-7,8-diammoniononanoate + CO2 + ATP = (4R,5S)-dethiobiotin + ADP + phosphate + 3 H(+). Its pathway is cofactor biosynthesis; biotin biosynthesis; biotin from 7,8-diaminononanoate: step 1/2. In terms of biological role, catalyzes a mechanistically unusual reaction, the ATP-dependent insertion of CO2 between the N7 and N8 nitrogen atoms of 7,8-diaminopelargonic acid (DAPA, also called 7,8-diammoniononanoate) to form a ureido ring. In Methanococcus vannielii (strain ATCC 35089 / DSM 1224 / JCM 13029 / OCM 148 / SB), this protein is ATP-dependent dethiobiotin synthetase BioD.